The sequence spans 123 residues: Large ribosomal subunit protein bL20 (123 aa).

This sequence belongs to the bacterial ribosomal protein bL20 family.

Binds directly to 23S ribosomal RNA and is necessary for the in vitro assembly process of the 50S ribosomal subunit. It is not involved in the protein synthesizing functions of that subunit. The protein is Large ribosomal subunit protein bL20 of Chlamydia trachomatis serovar L2b (strain UCH-1/proctitis).